Consider the following 372-residue polypeptide: MAFKQLFAAISLALSLSAANAAAVIEKRATCSNGKTVGDASCCAWFDVLDDIQQNLFHGGQCGAEAHESIRLVFHDSIAISPAMEAQGKFGGGGADGSIMIFDDIETAFHPNIGLDEIVKLQKPFVQKHGVTPGAFIAFAGAVALSNCPGAPQMNFFTGRAPATQPAPDGLVPEPFHTVDQIINRVNDAGEFDELELVWMLSAHSVAAVNDVDPTVQGLPFDSTPGIFDSQFFVETQLRGTAFPGSGGNQGEVESPLPGEIRIQSDHTIARDSRTACEWQSFVNNQSKLVDDFQFIFLALTQLGQDPNAMTDCSDVIPQSKPIPGNLPFSFFPAGKTIKDVEQACAETPFPTLTTLPGPETSVQRIPPPPGA.

The N-terminal stretch at 1-21 is a signal peptide; the sequence is MAFKQLFAAISLALSLSAANA. A propeptide spanning residues 22–28 is cleaved from the precursor; the sequence is AAVIEKR. Cystine bridges form between Cys-31/Cys-43, Cys-42/Cys-313, Cys-62/Cys-148, and Cys-277/Cys-345. His-75 functions as the Proton acceptor in the catalytic mechanism. Ca(2+) is bound by residues Asp-76, Gly-94, Asp-96, and Ser-98. Residue His-204 coordinates heme b. Residues Ser-205, Asp-222, Thr-224, Ile-227, and Asp-229 each contribute to the Ca(2+) site. An N-linked (GlcNAc...) asparagine glycan is attached at Asn-285. Residues 350-361 show a composition bias toward low complexity; the sequence is FPTLTTLPGPET. Positions 350–372 are disordered; that stretch reads FPTLTTLPGPETSVQRIPPPPGA.

The protein belongs to the peroxidase family. Ligninase subfamily. Heme b serves as cofactor. Ca(2+) is required as a cofactor.

It catalyses the reaction 1-(3,4-dimethoxyphenyl)-2-(2-methoxyphenoxy)propane-1,3-diol + H2O2 = 3,4-dimethoxybenzaldehyde + guaiacol + glycolaldehyde + H2O. The enzyme catalyses 2 (3,4-dimethoxyphenyl)methanol + H2O2 = 2 (3,4-dimethoxyphenyl)methanol radical + 2 H2O. The protein operates within secondary metabolite metabolism; lignin degradation. Functionally, depolymerization of lignin. Catalyzes the C(alpha)-C(beta) cleavage of the propyl side chains of lignin. In Phanerodontia chrysosporium (White-rot fungus), this protein is Ligninase B (LIPB).